A 244-amino-acid polypeptide reads, in one-letter code: Transcriptional activator protein FnrA (244 aa).

The HTH crp-type domain maps to 159–232; that stretch reads KTADERIATF…GKEVRILDSI (74 aa). The segment at residues 192–211 is a DNA-binding region (H-T-H motif); that stretch reads RNEIGNYLGLAVETVSRVFT.

In terms of biological role, transcriptional regulator of arginine deiminase. This chain is Transcriptional activator protein FnrA (fnrA), found in Stutzerimonas stutzeri (Pseudomonas stutzeri).